The primary structure comprises 143 residues: Large-conductance mechanosensitive channel (143 aa).

A run of 2 helical transmembrane segments spans residues 19–39 and 81–101; these read VGVI…GDLI and GSFL…FGVI.

It belongs to the MscL family. Homopentamer.

Its subcellular location is the cell inner membrane. Its function is as follows. Channel that opens in response to stretch forces in the membrane lipid bilayer. May participate in the regulation of osmotic pressure changes within the cell. In Rhodopseudomonas palustris (strain BisB5), this protein is Large-conductance mechanosensitive channel.